A 93-amino-acid polypeptide reads, in one-letter code: Small integral membrane protein 36 (93 aa).

Residues 14-34 traverse the membrane as a helical segment; the sequence is LIILVASYVILLLVFLVSCVL. The interval 70 to 93 is disordered; it reads SHWARGPSLHLKDPAPLGKKSTVV.

The protein resides in the membrane. This is Small integral membrane protein 36 from Mus musculus (Mouse).